Consider the following 395-residue polypeptide: Argininosuccinate synthase (395 aa).

ATP is bound by residues 6 to 14 (AYSGGLDTS) and Ala-33. Tyr-84 is an L-citrulline binding site. Gly-114 contacts ATP. L-aspartate-binding residues include Thr-116, Asn-120, and Asp-121. Asn-120 provides a ligand contact to L-citrulline. L-citrulline contacts are provided by Arg-124, Ser-173, Ser-182, Glu-258, and Tyr-270.

This sequence belongs to the argininosuccinate synthase family. Type 1 subfamily. As to quaternary structure, homotetramer.

It localises to the cytoplasm. The enzyme catalyses L-citrulline + L-aspartate + ATP = 2-(N(omega)-L-arginino)succinate + AMP + diphosphate + H(+). Its pathway is amino-acid biosynthesis; L-arginine biosynthesis; L-arginine from L-ornithine and carbamoyl phosphate: step 2/3. The sequence is that of Argininosuccinate synthase from Rhodococcoides fascians (Rhodococcus fascians).